The sequence spans 72 residues: Conotoxin VnMKLT2-021 (72 aa).

A signal peptide spans 1–22 (MKLTCVLIVAVLFLTACQLTTA). Residues 23 to 45 (ASYARSEREHPDLGSSDQNSKLT) constitute a propeptide that is removed on maturation. The interval 25–44 (YARSEREHPDLGSSDQNSKL) is disordered. Cystine bridges form between C48–C62, C55–C66, and C61–C71.

The protein belongs to the conotoxin O1 superfamily. As to expression, expressed by the venom duct.

The protein localises to the secreted. The protein is Conotoxin VnMKLT2-021 of Conus ventricosus (Mediterranean cone).